Consider the following 247-residue polypeptide: NAD-dependent protein deacetylase 2 (247 aa).

One can recognise a Deacetylase sirtuin-type domain in the interval 1-247; it reads MDQIRQLAQW…ASVRKQIQAE (247 aa). Positions 23, 27, 34, 35, 103, 105, 106, and 121 each coordinate NAD(+). Phe-34 lines the nicotinamide pocket. Nicotinamide-binding residues include Ile-105 and Asp-106. His-121 (proton acceptor) is an active-site residue. Residues Cys-129, Cys-132, Cys-149, and Cys-152 each coordinate Zn(2+). Thr-188, Ser-189, Asn-215, and Ile-233 together coordinate NAD(+).

This sequence belongs to the sirtuin family. Class U subfamily. The cofactor is Zn(2+).

It localises to the cytoplasm. It catalyses the reaction N(6)-acetyl-L-lysyl-[protein] + NAD(+) + H2O = 2''-O-acetyl-ADP-D-ribose + nicotinamide + L-lysyl-[protein]. NAD-dependent protein deacetylase which modulates the activities of several enzymes which are inactive in their acetylated form. This is NAD-dependent protein deacetylase 2 from Geobacillus kaustophilus (strain HTA426).